A 316-amino-acid polypeptide reads, in one-letter code: uncharacterized protein (316 aa).

This sequence to yeast YGR277c.

This is an uncharacterized protein from Schizosaccharomyces pombe (strain 972 / ATCC 24843) (Fission yeast).